Consider the following 340-residue polypeptide: Fructoselysine 6-phosphate deglycase (340 aa).

2 SIS domains span residues 35–169 (IVEE…RLAP) and 201–331 (LGEL…PDER).

In terms of assembly, homododecamer.

The enzyme catalyses N(6)-(6-phospho-D-fructosyl)-L-lysine + H2O = D-glucose 6-phosphate + L-lysine. It participates in carbohydrate metabolism; fructoselysine degradation; D-glucose 6-phosphate and lysine from fructoselysine: step 2/2. Catalyzes the reversible conversion of fructoselysine 6-phosphate to glucose 6-phosphate and lysine. Functions in a fructoselysine degradation pathway that allows E.coli to grow on fructoselysine or psicoselysine. This chain is Fructoselysine 6-phosphate deglycase (frlB), found in Escherichia coli O157:H7.